The following is a 223-amino-acid chain: 7-cyano-7-deazaguanine synthase (223 aa).

10-20 lines the ATP pocket; sequence FSGGQDSTTCL. Zn(2+) is bound by residues Cys188, Cys197, Cys200, and Cys203.

Belongs to the QueC family. Requires Zn(2+) as cofactor.

The catalysed reaction is 7-carboxy-7-deazaguanine + NH4(+) + ATP = 7-cyano-7-deazaguanine + ADP + phosphate + H2O + H(+). The protein operates within purine metabolism; 7-cyano-7-deazaguanine biosynthesis. In terms of biological role, catalyzes the ATP-dependent conversion of 7-carboxy-7-deazaguanine (CDG) to 7-cyano-7-deazaguanine (preQ(0)). The sequence is that of 7-cyano-7-deazaguanine synthase from Phocaeicola vulgatus (strain ATCC 8482 / DSM 1447 / JCM 5826 / CCUG 4940 / NBRC 14291 / NCTC 11154) (Bacteroides vulgatus).